The chain runs to 1114 residues: M-phase phosphoprotein 9 (1114 aa).

Disordered stretches follow at residues 1-55, 106-161, 183-207, 267-301, and 410-468; these read MEDF…KTGP, RPSC…DCHV, AKEPTEPLEPGAASQGQHPASVVQA, TSWAQRLKQNQSKQAHTEDDCSGPKPGSELNWKPP, and VLEP…STIP. Positions 24–51 are enriched in polar residues; sequence APQSLGLSLHANRSSPHLSTNGVSSFSG. A compositionally biased stretch (low complexity) spans 106–119; it reads RPSCSSSSVSEQVS. The segment covering 149 to 161 has biased composition (polar residues); sequence QPASSTSYPDCHV. Composition is skewed to polar residues over residues 267 to 280 and 429 to 446; these read TSWAQRLKQNQSKQ and HNPSQVSGFSKYPSTTRA. The segment at 368-729 is required for its centrosomal localization; it reads LSQVLTLDPG…EAQVKQAEHE (362 aa). Positions 382–431 are interaction with CEP97; it reads KPKEHVAGIQAHGFLHALDDRISFSPDSVLEPSLSRHSDTDSSSQASHNP. The stretch at 574–733 forms a coiled coil; it reads DRCGQLDSAL…KQAEHESMLS (160 aa). Phosphoserine; by TTBK2 is present on serine 710. Lysine 713 participates in a covalent cross-link: Glycyl lysine isopeptide (Lys-Gly) (interchain with G-Cter in ubiquitin). The residue at position 717 (serine 717) is a Phosphoserine; by TTBK2. Disordered regions lie at residues 727–755, 840–931, and 975–1002; these read EHESMLSLRNGAKVPERPSRSNSVATSDV, SWGT…GFSH, and EEKKYSEKNSDDPVNPSSCPEHSPNGLK. Residues 730-963 are interaction with KIF24; sequence SMLSLRNGAK…PVSTLQQTTA (234 aa). The segment covering 852–868 has biased composition (polar residues); that stretch reads SKLVNSRQTEPSVNTGR. The segment covering 881-898 has biased composition (low complexity); sequence QTSASQRSSSLPPSSRKA. Serine 926 carries the post-translational modification Phosphoserine. Residues 975-985 are compositionally biased toward basic and acidic residues; it reads EEKKYSEKNSD. Residues 1040–1105 are a coiled coil; the sequence is RTLAETERFF…GSVRMTLKKF (66 aa).

As to quaternary structure, interacts with CCP110, CEP97 and KIF24. TTBK2-mediated phosphorylation at Ser-710 and Ser-717, promotes its ubiquitination at Lys-713 leading to proteasomal degradation, loss of MPHOSPH9 facilitates the removal of the CP110-CEP97 complex from the mother centrioles, promoting the initiation of ciliogenesis. Phosphorylated in M (mitotic) phase. In terms of processing, ubiquitinated at Lys-713, leading to proteasomal degradation.

It localises to the cytoplasm. Its subcellular location is the cytoskeleton. The protein localises to the microtubule organizing center. The protein resides in the centrosome. It is found in the centriole. It localises to the golgi apparatus membrane. Negatively regulates cilia formation by recruiting the CP110-CEP97 complex (a negative regulator of ciliogenesis) at the distal end of the mother centriole in ciliary cells. At the beginning of cilia formation, MPHOSPH9 undergoes TTBK2-mediated phosphorylation and degradation via the ubiquitin-proteasome system and removes itself and the CP110-CEP97 complex from the distal end of the mother centriole, which subsequently promotes cilia formation. This Mus musculus (Mouse) protein is M-phase phosphoprotein 9 (Mphosph9).